Here is a 203-residue protein sequence, read N- to C-terminus: NAD(P)H dehydrogenase (quinone) (203 aa).

Positions 7 to 194 (VLVLYHSSYG…SLARKQGAHV (188 aa)) constitute a Flavodoxin-like domain. Residues 13–18 (SSYGHI) and 82–84 (TRF) contribute to the FMN site. Position 15 (Tyr15) interacts with NAD(+). Trp102 provides a ligand contact to substrate. FMN contacts are provided by residues 117–122 (STGTGG) and His137.

The protein belongs to the WrbA family. FMN serves as cofactor.

It carries out the reaction a quinone + NADH + H(+) = a quinol + NAD(+). It catalyses the reaction a quinone + NADPH + H(+) = a quinol + NADP(+). The sequence is that of NAD(P)H dehydrogenase (quinone) from Parvibaculum lavamentivorans (strain DS-1 / DSM 13023 / NCIMB 13966).